We begin with the raw amino-acid sequence, 435 residues long: Matrix extracellular phosphoglycoprotein (435 aa).

A signal peptide spans 1-16 (MQAVSVGLFLFSMTWA). N71 is a glycosylation site (N-linked (GlcNAc...) asparagine). Disordered stretches follow at residues 124–145 (LLQN…THYL) and 166–435 (LLVR…SSGD). Positions 164–186 (PDLLVRGDNDVPPFSGDGQHFMH) are dentonin. Positions 169 to 171 (RGD) match the Cell attachment site motif. A glycan (O-linked (Xyl...) (chondroitin sulfate) serine) is linked at S178. Composition is skewed to basic and acidic residues over residues 267–278 (KFRELPGKEGNR) and 300–313 (SKEK…EHTG). The segment covering 337–346 (GNQVTLTESQ) has biased composition (polar residues). 2 stretches are compositionally biased toward basic residues: residues 382-391 (AHRRTSHPTR) and 405-415 (RRPHPHRRVST). The ASARM motif; interaction with PHEX stretch occupies residues 418 to 435 (RDSSESSSSGSSSESSGD). Residues 422-435 (ESSSSGSSSESSGD) are compositionally biased toward low complexity.

The protein belongs to the PF07175/osteoregulin family. As to quaternary structure, interacts (via ASARM motif) with PHEX; the interaction is zinc-dependent. Post-translationally, phosphorylated on serine residues in the ASARM motif; the phosphorylation is important for the inhibition of bone mineralization. In terms of processing, cleaved by CTSB/cathepsin B; the cleavage is blocked by metalloprotease PHEX. In terms of tissue distribution, expressed in osteoblasts and osteocytes.

The protein localises to the secreted. It is found in the extracellular space. The protein resides in the extracellular matrix. Its function is as follows. Regulates renal phosphate excretion. Regulates bone mineralization by osteoblasts and cartilage mineralization by chondrocytes. Regulates the mineralization of the extracellular matrix of the craniofacial complex, such as teeth, bone and cartilage. Increases dental pulp stem cell proliferation. In Rattus norvegicus (Rat), this protein is Matrix extracellular phosphoglycoprotein.